Consider the following 201-residue polypeptide: ATP-dependent Clp protease proteolytic subunit (201 aa).

Catalysis depends on serine 105, which acts as the Nucleophile. The active site involves histidine 130.

This sequence belongs to the peptidase S14 family. In terms of assembly, fourteen ClpP subunits assemble into 2 heptameric rings which stack back to back to give a disk-like structure with a central cavity, resembling the structure of eukaryotic proteasomes.

The protein resides in the cytoplasm. It catalyses the reaction Hydrolysis of proteins to small peptides in the presence of ATP and magnesium. alpha-casein is the usual test substrate. In the absence of ATP, only oligopeptides shorter than five residues are hydrolyzed (such as succinyl-Leu-Tyr-|-NHMec, and Leu-Tyr-Leu-|-Tyr-Trp, in which cleavage of the -Tyr-|-Leu- and -Tyr-|-Trp bonds also occurs).. Its function is as follows. Cleaves peptides in various proteins in a process that requires ATP hydrolysis. Has a chymotrypsin-like activity. Plays a major role in the degradation of misfolded proteins. In Aquifex aeolicus (strain VF5), this protein is ATP-dependent Clp protease proteolytic subunit.